Reading from the N-terminus, the 184-residue chain is Ribosome-recycling factor (184 aa).

The segment at 137–158 (DSIKAKQKDGIPEDEAKRGQDE) is disordered.

Belongs to the RRF family.

The protein localises to the cytoplasm. Its function is as follows. Responsible for the release of ribosomes from messenger RNA at the termination of protein biosynthesis. May increase the efficiency of translation by recycling ribosomes from one round of translation to another. The sequence is that of Ribosome-recycling factor from Desulforamulus reducens (strain ATCC BAA-1160 / DSM 100696 / MI-1) (Desulfotomaculum reducens).